We begin with the raw amino-acid sequence, 184 residues long: Type-1 fimbrial protein, A chain (184 aa).

The N-terminal stretch at 1 to 22 is a signal peptide; it reads MKHKLMTSTIASLMFVAGAAVA. A disulfide bridge connects residues cysteine 46 and cysteine 86.

It belongs to the fimbrial protein family.

It localises to the fimbrium. Fimbriae (also called pili), polar filaments radiating from the surface of the bacterium to a length of 0.5-1.5 micrometers and numbering 100-300 per cell, enable bacteria to colonize the epithelium of specific host organs. In Salmonella typhi, this protein is Type-1 fimbrial protein, A chain (fimA).